The sequence spans 96 residues: UPF0235 protein YE3436 (96 aa).

It belongs to the UPF0235 family.

In Yersinia enterocolitica serotype O:8 / biotype 1B (strain NCTC 13174 / 8081), this protein is UPF0235 protein YE3436.